A 293-amino-acid chain; its full sequence is 33 kDa chaperonin (293 aa).

2 disulfides stabilise this stretch: Cys235–Cys237 and Cys267–Cys270.

It belongs to the HSP33 family. In terms of processing, under oxidizing conditions two disulfide bonds are formed involving the reactive cysteines. Under reducing conditions zinc is bound to the reactive cysteines and the protein is inactive.

It localises to the cytoplasm. Redox regulated molecular chaperone. Protects both thermally unfolding and oxidatively damaged proteins from irreversible aggregation. Plays an important role in the bacterial defense system toward oxidative stress. The polypeptide is 33 kDa chaperonin (Deinococcus radiodurans (strain ATCC 13939 / DSM 20539 / JCM 16871 / CCUG 27074 / LMG 4051 / NBRC 15346 / NCIMB 9279 / VKM B-1422 / R1)).